A 201-amino-acid polypeptide reads, in one-letter code: MPFKPLVTAGIESLLNTFLYRSPALKTARSRLLGKVLRVEVKGFSTSLILVFSERQVDVLGEWAGDADCTVIAYASVLPKLRDRQQLTALIRSGELEVQGDIQVVQNFVALADLAEFDPAELLAPYTGDIAAEGISKAMRGGAKFLHHGIKRQQRYVAEAITEEWRMAPGPLEVAWFAEETAAVERAVDALTKRLEKLEAK.

In terms of domain architecture, SCP2 spans 15-112 (LNTFLYRSPA…QVVQNFVALA (98 aa)).

The protein belongs to the UbiJ family. In terms of assembly, component of the Ubi complex metabolon, which regroups five ubiquinone biosynthesis proteins (UbiE, UbiF, UbiG, UbiH and UbiI) and two accessory factors (UbiK and the lipid-binding protein UbiJ). Interacts with UbiK and forms a complex composed of 2 UbiK subunits and 1 UbiJ subunit. The UbiK-UbiJ complex interacts with palmitoleic acid.

The protein localises to the cytoplasm. Its pathway is cofactor biosynthesis; ubiquinone biosynthesis. In terms of biological role, required for ubiquinone (coenzyme Q) biosynthesis under aerobic conditions. Binds hydrophobic ubiquinone biosynthetic intermediates via its SCP2 domain and is essential for the stability of the Ubi complex. May constitute a docking platform where Ubi enzymes assemble and access their SCP2-bound polyprenyl substrates. The chain is Ubiquinone biosynthesis accessory factor UbiJ from Escherichia coli (strain K12).